Consider the following 238-residue polypeptide: UPF0758 protein Dtpsy_2777 (238 aa).

One can recognise an MPN domain in the interval Val116–Val238. Zn(2+)-binding residues include His187, His189, and Asp200. The short motif at His187 to Asp200 is the JAMM motif element.

Belongs to the UPF0758 family.

The sequence is that of UPF0758 protein Dtpsy_2777 from Acidovorax ebreus (strain TPSY) (Diaphorobacter sp. (strain TPSY)).